The primary structure comprises 371 residues: Ferrochelatase (371 aa).

Residues H218 and E299 each coordinate Fe cation.

This sequence belongs to the ferrochelatase family.

The protein resides in the cytoplasm. It catalyses the reaction heme b + 2 H(+) = protoporphyrin IX + Fe(2+). It functions in the pathway porphyrin-containing compound metabolism; protoheme biosynthesis; protoheme from protoporphyrin-IX: step 1/1. Its function is as follows. Catalyzes the ferrous insertion into protoporphyrin IX. This is Ferrochelatase from Cupriavidus metallidurans (strain ATCC 43123 / DSM 2839 / NBRC 102507 / CH34) (Ralstonia metallidurans).